Reading from the N-terminus, the 212-residue chain is Thymidylate kinase (212 aa).

13–20 (GLEGAGKS) provides a ligand contact to ATP.

The protein belongs to the thymidylate kinase family.

The enzyme catalyses dTMP + ATP = dTDP + ADP. Functionally, phosphorylation of dTMP to form dTDP in both de novo and salvage pathways of dTTP synthesis. The protein is Thymidylate kinase of Legionella pneumophila (strain Paris).